Here is a 561-residue protein sequence, read N- to C-terminus: Putative transport protein YbjL (561 aa).

5 helical membrane passes run L8 to G28, L32 to Q52, F66 to F86, M94 to F114, and N158 to A178. RCK C-terminal domains follow at residues L202 to N288 and V292 to F373. Transmembrane regions (helical) follow at residues L383–F403, F406–M426, V451–I471, M475–A495, and A540–L560.

It belongs to the AAE transporter (TC 2.A.81) family. YbjL subfamily.

Its subcellular location is the cell membrane. The chain is Putative transport protein YbjL from Escherichia fergusonii (strain ATCC 35469 / DSM 13698 / CCUG 18766 / IAM 14443 / JCM 21226 / LMG 7866 / NBRC 102419 / NCTC 12128 / CDC 0568-73).